Here is a 101-residue protein sequence, read N- to C-terminus: Urease subunit beta (101 aa).

It belongs to the urease beta subunit family. In terms of assembly, heterotrimer of UreA (gamma), UreB (beta) and UreC (alpha) subunits. Three heterotrimers associate to form the active enzyme.

It localises to the cytoplasm. The enzyme catalyses urea + 2 H2O + H(+) = hydrogencarbonate + 2 NH4(+). The protein operates within nitrogen metabolism; urea degradation; CO(2) and NH(3) from urea (urease route): step 1/1. This chain is Urease subunit beta, found in Haemophilus influenzae (strain 86-028NP).